Reading from the N-terminus, the 479-residue chain is UDP-glycosyltransferase 71B6 (479 aa).

Residues serine 275, 342–344 (AEQ), 359–367 (HGGWNSTLE), and 381–384 (YAEQ) contribute to the UDP-alpha-D-glucose site.

Belongs to the UDP-glycosyltransferase family.

Glucosyltransferase that glucosylates the (+) enantiomer of abscisic acid ((+)-ABA). Is not active on structural analogs with alterations to the 8'- and 9'- methyl groups. The sequence is that of UDP-glycosyltransferase 71B6 (UGT71B6) from Arabidopsis thaliana (Mouse-ear cress).